Here is a 312-residue protein sequence, read N- to C-terminus: DDRGK domain-containing protein 1 (312 aa).

Over 1–2 (ME) the chain is Lumenal. Residues 3 to 23 (LIILVGIATALLVVIITLYLL) traverse the membrane as a helical segment. Topologically, residues 24-312 (QKKNAAPETK…ISAGGEEASS (289 aa)) are cytoplasmic. The span at 59 to 79 (NQRNRLRQNAPAAPAGQVAPA) shows a compositional bias: low complexity. The disordered stretch occupies residues 59 to 162 (NQRNRLRQNA…RKHQEDLEAE (104 aa)). Over residues 110–162 (LDEKMGAKKRAKMEAKEQKRLQREQELHDREQRKVKEAKEEAERKHQEDLEAE) the composition is skewed to basic and acidic residues.

Belongs to the DDRGK1 family. As to quaternary structure, interacts with Atg9; the interaction is transient.

It localises to the endoplasmic reticulum membrane. In terms of biological role, substrate adapter for ufmylation, the covalent attachment of the ubiquitin-like modifier UFM1 to substrate proteins. Required for ufmylation of Atg9; protects the nervous system during aging, possibly by stabilizing Atg9 and supporting its function. This is DDRGK domain-containing protein 1 from Drosophila yakuba (Fruit fly).